Here is a 260-residue protein sequence, read N- to C-terminus: Phosphate import ATP-binding protein PstB 1 (260 aa).

The region spanning 13 to 255 is the ABC transporter domain; the sequence is ISARDLNVHY…PQHPLTQGYI (243 aa). 45–52 contributes to the ATP binding site; the sequence is GPSGCGKS.

Belongs to the ABC transporter superfamily. Phosphate importer (TC 3.A.1.7) family. In terms of assembly, the complex is composed of two ATP-binding proteins (PstB), two transmembrane proteins (PstC and PstA) and a solute-binding protein (PstS).

It is found in the cell inner membrane. It catalyses the reaction phosphate(out) + ATP + H2O = ADP + 2 phosphate(in) + H(+). Part of the ABC transporter complex PstSACB involved in phosphate import. Responsible for energy coupling to the transport system. The sequence is that of Phosphate import ATP-binding protein PstB 1 from Paramagnetospirillum magneticum (strain ATCC 700264 / AMB-1) (Magnetospirillum magneticum).